Here is a 266-residue protein sequence, read N- to C-terminus: Undecaprenyl-diphosphatase (266 aa).

The next 8 helical transmembrane spans lie at 1 to 21 (MDTF…FLPI), 39 to 59 (QGLS…VMYF), 87 to 107 (WWII…KDFI), 111 to 131 (FRSI…LWWA), 144 to 164 (VGWK…IPGT), 183 to 203 (AAAR…AILV), 218 to 238 (ALGL…HYFL), and 246 to 266 (MTPF…IIFL).

Belongs to the UppP family.

Its subcellular location is the cell inner membrane. The catalysed reaction is di-trans,octa-cis-undecaprenyl diphosphate + H2O = di-trans,octa-cis-undecaprenyl phosphate + phosphate + H(+). Its function is as follows. Catalyzes the dephosphorylation of undecaprenyl diphosphate (UPP). Confers resistance to bacitracin. This Shewanella pealeana (strain ATCC 700345 / ANG-SQ1) protein is Undecaprenyl-diphosphatase.